A 191-amino-acid chain; its full sequence is Flavin reductase (NADH) (191 aa).

Position 46 to 52 (46 to 52) interacts with FAD; that stretch reads YGLTCSA. An NAD(+)-binding site is contributed by Ser-55. 72–73 is an FAD binding site; sequence RV. NAD(+)-binding positions include His-144 and 166–169; that span reads YWRR.

This sequence belongs to the non-flavoprotein flavin reductase family.

The catalysed reaction is a reduced flavin + NAD(+) = an oxidized flavin + NADH + 2 H(+). Functionally, catalyzes the reduction of flavin by NADH. Subsequently, the reduced flavins is transferred to the tetracycline 7-halogenase CtcP. This Kitasatospora aureofaciens (Streptomyces aureofaciens) protein is Flavin reductase (NADH).